We begin with the raw amino-acid sequence, 474 residues long: PTS system N-acetylmuramic acid-specific EIIBC component (474 aa).

The PTS EIIB type-1 domain occupies 1–89; it reads MAKEISSELL…SELLGEAPVQ (89 aa). Topologically, residues 1-123 are cytoplasmic; the sequence is MAKEISSELL…LAKFATIFTP (123 aa). Residue C29 is the Phosphocysteine intermediate; for EIIB activity of the active site. Residues 115 to 474 form the PTS EIIC type-1 domain; it reads AKFATIFTPL…LFGCRNVNLD (360 aa). The chain crosses the membrane as a helical span at residues 124-144; the sequence is LIPGFIAAGLLLGIATLIATV. The Periplasmic portion of the chain corresponds to 145-157; that stretch reads MHVPADAQGTLPD. The chain crosses the membrane as a helical span at residues 158 to 178; that stretch reads ALNFMKVFSKGLFTFLVILVG. The Cytoplasmic segment spans residues 179 to 180; it reads YN. A helical membrane pass occupies residues 181 to 201; that stretch reads AAQAFGGTGVNGAIIAALFLL. Residues 202–217 are Periplasmic-facing; that stretch reads GYNPAATTGYYAGFHD. The chain crosses the membrane as a helical span at residues 218-238; that stretch reads FFGLPIDPRGNIIGVLIAAWA. Over 239 to 260 the chain is Cytoplasmic; the sequence is CARIEGMVRRFMPDDLDMLLTS. Residues 261 to 281 form a helical membrane-spanning segment; the sequence is LITLLITATLAYLIIMPLGGW. The Periplasmic segment spans residues 282–301; that stretch reads LFEGMSWLFMHLNSNPLGCA. The chain crosses the membrane as a helical span at residues 302 to 322; it reads VLAGLFLIAVVFGVHQGFIPV. Over 323–334 the chain is Cytoplasmic; it reads YLALMDSQGFNS. A helical transmembrane segment spans residues 335 to 355; sequence LFPILSMAGAGQVGAALALYW. The Periplasmic segment spans residues 356 to 368; the sequence is RAQPHSALRSQVR. Residues 369-389 form a helical membrane-spanning segment; that stretch reads GAIIPGLLGVGEPLIYGVTLP. Residues 390-393 lie on the Cytoplasmic side of the membrane; sequence RMKP. Residues 394–414 form a helical membrane-spanning segment; the sequence is FITACLGGAAGGLFIGLIAWW. At 415–440 the chain is on the periplasmic side; the sequence is GLPMGLNSAFGPSGLVALPLMTSAQG. A helical transmembrane segment spans residues 441 to 461; the sequence is ILPAMAVYAGGILVAWVCGFI. The Cytoplasmic segment spans residues 462-474; that stretch reads FTTLFGCRNVNLD.

It is found in the cell inner membrane. It carries out the reaction N-acetyl-beta-D-muramate(out) + N(pros)-phospho-L-histidyl-[protein] = N-acetyl-beta-D-muramate 6-phosphate(in) + L-histidyl-[protein]. Its function is as follows. The phosphoenolpyruvate-dependent sugar phosphotransferase system (sugar PTS), a major carbohydrate active transport system, catalyzes the phosphorylation of incoming sugar substrates concomitantly with their translocation across the cell membrane. This system is involved in N-acetylmuramic acid (MurNAc) transport, yielding cytoplasmic MurNAc-6-P. Is also able to take up anhydro-N-acetylmuramic acid (anhMurNAc), but cannot phosphorylate the carbon 6, probably because of the 1,6-anhydro ring. This chain is PTS system N-acetylmuramic acid-specific EIIBC component (murP), found in Escherichia coli O157:H7.